The primary structure comprises 426 residues: Cell cycle checkpoint control protein RAD9B (426 aa).

The residue at position 359 (S359) is a Phosphoserine.

It belongs to the rad9 family. In terms of assembly, interacts with HUS1, HUS1B, RAD1, RAD9A and RAD17. As to expression, expressed in testis and skeletal muscle.

This Homo sapiens (Human) protein is Cell cycle checkpoint control protein RAD9B (RAD9B).